A 390-amino-acid polypeptide reads, in one-letter code: Transforming growth factor beta-1 proprotein (390 aa).

Positions 1-29 (MPPSGLRLLPLLLPLLWLLMLTPGRPVAG) are cleaved as a signal peptide. Positions 30-74 (LSTCKTIDMELVKRKGIEAIRGQILSKLRLASPPSQGDVPPGPLP) are straightjacket domain. Residues 75–271 (EAILALYNST…ATPLERAQHL (197 aa)) form an arm domain region. N-linked (GlcNAc...) asparagine glycans are attached at residues N82, N136, and N176. Residues 226–252 (DSKDNTLQVDINGFSSGRRGDLATIHG) form a bowtie tail region. The Cell attachment site motif lies at 244-246 (RGD). Cystine bridges form between C285–C294, C293–C356, C322–C387, and C326–C389.

The protein belongs to the TGF-beta family. In terms of assembly, homodimer; disulfide-linked. Interacts with the serine proteases, HTRA1 and HTRA3: the interaction with either inhibits TGFB1-mediated signaling and the HTRA protease activity is required for this inhibition. May interact with THSD4; this interaction may lead to sequestration by FBN1 microfibril assembly and attenuation of TGFB signaling. Interacts with CD109, DPT and ASPN. Interacts with EFEMP2. Interacts with TSKU; the interaction contributes to regulation of the hair cycle. Interacts with TGFBR3. Homodimer; disulfide-linked. Interacts with transforming growth factor beta-1 (TGF-beta-1) chain; interaction is non-covalent and maintains TGF-beta-1 in a latent state; each latency-associated peptide (LAP) monomer interacts with TGF-beta-1 in the other monomer. Interacts with LTBP1; leading to regulation of TGF-beta-1 activation. Interacts with LRRC32/GARP; leading to regulation of TGF-beta-1 activation on the surface of activated regulatory T-cells (Tregs). Interacts with LRRC33/NRROS; leading to regulation of TGF-beta-1 activation in macrophages and microglia. Interacts (via cell attachment site) with integrins ITGAV and ITGB6 (ITGAV:ITGB6), leading to release of the active TGF-beta-1. Interacts with NREP; the interaction results in a decrease in TGFB1 autoinduction. Interacts with HSP90AB1; inhibits latent TGFB1 activation. As to quaternary structure, homodimer; disulfide-linked. Interacts with TGF-beta receptors (TGFBR1 and TGFBR2), leading to signal transduction. In terms of processing, transforming growth factor beta-1 proprotein: The precursor proprotein is cleaved in the Golgi apparatus by FURIN to form Transforming growth factor beta-1 (TGF-beta-1) and Latency-associated peptide (LAP) chains, which remain non-covalently linked, rendering TGF-beta-1 inactive. N-glycosylated. Deglycosylation leads to activation of Transforming growth factor beta-1 (TGF-beta-1); mechanisms triggering deglycosylation-driven activation of TGF-beta-1 are however unclear.

It localises to the secreted. Its subcellular location is the extracellular space. It is found in the extracellular matrix. Its function is as follows. Transforming growth factor beta-1 proprotein: Precursor of the Latency-associated peptide (LAP) and Transforming growth factor beta-1 (TGF-beta-1) chains, which constitute the regulatory and active subunit of TGF-beta-1, respectively. Required to maintain the Transforming growth factor beta-1 (TGF-beta-1) chain in a latent state during storage in extracellular matrix. Associates non-covalently with TGF-beta-1 and regulates its activation via interaction with 'milieu molecules', such as LTBP1, LRRC32/GARP and LRRC33/NRROS, that control activation of TGF-beta-1. Interaction with LRRC33/NRROS regulates activation of TGF-beta-1 in macrophages and microglia. Interaction with LRRC32/GARP controls activation of TGF-beta-1 on the surface of activated regulatory T-cells (Tregs). Interaction with integrins (ITGAV:ITGB6 or ITGAV:ITGB8) results in distortion of the Latency-associated peptide chain and subsequent release of the active TGF-beta-1. Functionally, multifunctional protein that regulates the growth and differentiation of various cell types and is involved in various processes, such as normal development, immune function, microglia function and responses to neurodegeneration. Activation into mature form follows different steps: following cleavage of the proprotein in the Golgi apparatus, Latency-associated peptide (LAP) and Transforming growth factor beta-1 (TGF-beta-1) chains remain non-covalently linked rendering TGF-beta-1 inactive during storage in extracellular matrix. At the same time, LAP chain interacts with 'milieu molecules', such as LTBP1, LRRC32/GARP and LRRC33/NRROS that control activation of TGF-beta-1 and maintain it in a latent state during storage in extracellular milieus. TGF-beta-1 is released from LAP by integrins (ITGAV:ITGB6 or ITGAV:ITGB8): integrin-binding to LAP stabilizes an alternative conformation of the LAP bowtie tail and results in distortion of the LAP chain and subsequent release of the active TGF-beta-1. Once activated following release of LAP, TGF-beta-1 acts by binding to TGF-beta receptors (TGFBR1 and TGFBR2), which transduce signal. While expressed by many cells types, TGF-beta-1 only has a very localized range of action within cell environment thanks to fine regulation of its activation by Latency-associated peptide chain (LAP) and 'milieu molecules'. Plays an important role in bone remodeling: acts as a potent stimulator of osteoblastic bone formation, causing chemotaxis, proliferation and differentiation in committed osteoblasts. Can promote either T-helper 17 cells (Th17) or regulatory T-cells (Treg) lineage differentiation in a concentration-dependent manner. At high concentrations, leads to FOXP3-mediated suppression of RORC and down-regulation of IL-17 expression, favoring Treg cell development. At low concentrations in concert with IL-6 and IL-21, leads to expression of the IL-17 and IL-23 receptors, favoring differentiation to Th17 cells. Stimulates sustained production of collagen through the activation of CREB3L1 by regulated intramembrane proteolysis (RIP). Mediates SMAD2/3 activation by inducing its phosphorylation and subsequent translocation to the nucleus. Positively regulates odontoblastic differentiation in dental papilla cells, via promotion of IPO7-mediated translocation of phosphorylated SMAD2 to the nucleus and subsequent transcription of target genes. Can induce epithelial-to-mesenchymal transition (EMT) and cell migration in various cell types. In Ovis aries (Sheep), this protein is Transforming growth factor beta-1 proprotein (TGFB1).